The primary structure comprises 268 residues: GTP cyclohydrolase III (268 aa).

The protein belongs to the archaeal-type GTP cyclohydrolase family. Homotrimer. Requires Mg(2+) as cofactor.

It catalyses the reaction GTP + 3 H2O = 2-amino-5-formylamino-6-(5-phospho-D-ribosylamino)pyrimidin-4(3H)-one + 2 phosphate + 2 H(+). In terms of biological role, catalyzes the formation of 2-amino-5-formylamino-6-ribofuranosylamino-4(3H)-pyrimidinone ribonucleotide monophosphate and inorganic phosphate from GTP. Also has an independent pyrophosphate phosphohydrolase activity. This chain is GTP cyclohydrolase III (gch3), found in Methanocaldococcus jannaschii (strain ATCC 43067 / DSM 2661 / JAL-1 / JCM 10045 / NBRC 100440) (Methanococcus jannaschii).